A 1856-amino-acid chain; its full sequence is DNA-directed RNA polymerase II subunit RPB1 (1856 aa).

8 residues coordinate Zn(2+): C66, C69, C76, H79, C106, C109, C149, and C177. The segment at P256–D268 is lid loop. A rudder loop region spans residues N314–K331. Mg(2+) is bound by residues D489, D491, and D493. The interval P827–E839 is bridging helix. Residue K1260 forms a Glycyl lysine isopeptide (Lys-Gly) (interchain with G-Cter in ubiquitin) linkage. A disordered region spans residues P1523–S1856. A compositionally biased stretch (low complexity) spans S1587–S1856. 27 repeat units span residues Y1593–S1599, Y1600–A1606, Y1616–S1622, Y1623–S1629, Y1630–S1636, Y1637–S1643, Y1644–S1650, Y1651–S1657, Y1658–S1664, Y1665–S1671, Y1672–R1678, Y1679–T1685, Y1686–T1692, Y1693–T1699, Y1700–T1706, Y1707–S1713, Y1720–K1726, Y1727–T1733, Y1734–S1740, Y1741–Q1747, Y1748–Q1754, Y1755–T1761, Y1769–R1775, Y1782–T1788, Y1789–S1795, Y1796–Q1802, and Y1803–T1809. Positions Y1593 to E1816 are C-terminal domain (CTD); 28 X 7 AA approximate tandem repeats of Y-[ST]-P-[ST]-S-P-[AGKNQRST]. A 28; approximate repeat occupies Y1810–E1816.

This sequence belongs to the RNA polymerase beta' chain family. In terms of assembly, component of the RNA polymerase II (Pol II) complex consisting of 12 subunits. Interacts with sig-7. Post-translationally, the tandem 7 residues repeats in the C-terminal domain (CTD) can be highly phosphorylated. The phosphorylation activates Pol II. Phosphorylation occurs mainly at residues 'Ser-2' and 'Ser-5' of the heptapeptide repeat and starts at the 3- to 4-cell embryonic stage. This phosphorylation also occurs in the early stages of oocyte development and is not detected in oocytes arrested at the meiotic diakinesis stage. In the somatic lineage, phosphorylation at 'Ser-2' is mediated by cdk-12 downstream of cdk-9 whereas in the germline lineage cdk-12 phosphorylates 'Ser-2' independently of cdk-9. Phosphorylation is likely mediated by cdk-7. May be dephosphorylated by fcp-1 in diakinetic oocytes and in 1-cell and 2-cell embryos. Dephosphorylated at 'Ser-5' of the heptapeptide repeats by ssup-72. The phosphorylation state is believed to result from the balanced action of site-specific CTD kinases and phosphatase, and a 'CTD code' that specifies the position of Pol II within the transcription cycle has been proposed. In terms of processing, following transcription stress, the elongating form of RNA polymerase II (RNA pol IIo) is polyubiquitinated via 'Lys-63'-linkages on Lys-1260 at DNA damage sites without leading to degradation: ubiquitination promotes RNA pol IIo backtracking to allow access by the transcription-coupled nucleotide excision repair (TC-NER) machinery. Subsequent DEF1-dependent polyubiquitination by the elongin complex via 'Lys-48'-linkages may lead to proteasome-mediated degradation; presumably at stalled RNA pol II where TC-NER has failed, to halt global transcription and enable 'last resort' DNA repair pathways.

It is found in the nucleus. The protein resides in the chromosome. It catalyses the reaction RNA(n) + a ribonucleoside 5'-triphosphate = RNA(n+1) + diphosphate. DNA-dependent RNA polymerase catalyzes the transcription of DNA into RNA using the four ribonucleoside triphosphates as substrates. Largest and catalytic component of RNA polymerase II which synthesizes mRNA precursors and many functional non-coding RNAs. Forms the polymerase active center together with the second largest subunit. Pol II is the central component of the basal RNA polymerase II transcription machinery. It is composed of mobile elements that move relative to each other. RPB1 is part of the core element with the central large cleft, the clamp element that moves to open and close the cleft and the jaws that are thought to grab the incoming DNA template. At the start of transcription, a single-stranded DNA template strand of the promoter is positioned within the central active site cleft of Pol II. A bridging helix emanates from RPB1 and crosses the cleft near the catalytic site and is thought to promote translocation of Pol II by acting as a ratchet that moves the RNA-DNA hybrid through the active site by switching from straight to bent conformations at each step of nucleotide addition. During transcription elongation, Pol II moves on the template as the transcript elongates. Elongation is influenced by the phosphorylation status of the C-terminal domain (CTD) of Pol II largest subunit (RPB1), which serves as a platform for assembly of factors that regulate transcription initiation, elongation, termination and mRNA processing. Involved in the transcription of several genes including those involved in embryogenesis. This Caenorhabditis elegans protein is DNA-directed RNA polymerase II subunit RPB1.